The chain runs to 164 residues: uncharacterized protein (164 aa).

A helical transmembrane segment spans residues Phe-46–Tyr-66. Residues Lys-72–Glu-137 are a coiled coil. Basic and acidic residues predominate over residues Glu-76–Thr-91. Positions Glu-76 to Lys-114 are disordered.

Its subcellular location is the membrane. This is an uncharacterized protein from Acanthamoeba polyphaga mimivirus (APMV).